The following is a 499-amino-acid chain: Citrinin biosynthesis cluster MFS transporter mrr1 (499 aa).

The tract at residues 1–29 (MKEEIDAPVSTDASGTDLENARDQPSGEK) is disordered. Helical transmembrane passes span 58-78 (SLITCIFSTLTIWVTFSSSVF), 95-115 (VMTLGTSLTVLGFTVGPLVWG), 124-144 (LKPLYIGYAIFIIFQVPVAVA), 155-175 (FFLGFFGTSALAIIPGALADF), 187-207 (LFSAATFVGPIFGPIIGGFIV), 215-235 (WTAWITMIPASFFGIIAFLTL), 291-311 (ILVCMTIYISLIYGILYLFFV), and 327-347 (GIAALPFLGILVGVLMGCLLV). N-linked (GlcNAc...) asparagine glycosylation occurs at asparagine 361. A run of 4 helical transmembrane segments spans residues 370-390 (LPPMIVAAILLPIGLFWFGWT), 395-415 (ISWAPQAIAGAPIGMGILMIW), 443-463 (AVGAAFPLFATAMYHKLGVDW), and 467-487 (LLGFLSIAMIPIPVIFYFYGA).

This sequence belongs to the major facilitator superfamily. CAR1 family.

The protein resides in the membrane. MFS transporter; part of the gene cluster that mediates the biosynthesis the mycotoxin citrinin, a hepato-nephrotoxic compound to humans due to inhibition of respiration complex III. The protein is Citrinin biosynthesis cluster MFS transporter mrr1 of Monascus ruber (Mold).